Reading from the N-terminus, the 466-residue chain is MPRTLTASDMVTPGSLSPPPTESTEGEQAGQPLLDGAPSSASLDTLIQHLVPTADYYPEKAYIFTFLLSSRLFIEPRELLARVCHLCIEQQQLDKPVLDKARVRKFGAKLLQLLAEWTETFPRDFEEESTIGHLTDVVGRISPCDETYGSRVHQLLQTLHQKLASLGQGPESLVGADKPISYRTKPPASIHRELLGVCSDPYTLAQQLTHVELERLRHIGPEEFVQAFVNKDPLAGTKPRFSDKTNNVEAYVKWFNRLCYLVATEICMPAKKKQRAQVIEFFIDVARECFNIGNFNSLMAIISGMNMSPVSRLKKTWAKVKTAKFFILEHQMDPTGNFCNYRTALRGAAHRSLTAHSSREKIVIPFFSLLIKDIYFLNEGCANRLPNGHVNFEKFLELAKQVGEFITWKQVECPFEQDPSITHYLYTAPIFSEDGLYLASYESESPESQTEKERWKSLRSSILGKT.

Disordered regions lie at residues methionine 1 to aspartate 35 and serine 443 to threonine 466. Positions leucine 34–alanine 164 constitute an N-terminal Ras-GEF domain. The Ras-GEF domain occupies aspartate 200 to proline 446.

Guanine nucleotide exchange factor (GEF). The sequence is that of Ras-GEF domain-containing family member 1C (Rasgef1c) from Mus musculus (Mouse).